Reading from the N-terminus, the 209-residue chain is Uracil phosphoribosyltransferase (209 aa).

5-phospho-alpha-D-ribose 1-diphosphate-binding positions include Arg79, Arg104, and 131 to 139 (DPMLATGGS). Uracil contacts are provided by residues Ile194 and 199 to 201 (GDA). Asp200 is a binding site for 5-phospho-alpha-D-ribose 1-diphosphate.

It belongs to the UPRTase family. It depends on Mg(2+) as a cofactor.

The catalysed reaction is UMP + diphosphate = 5-phospho-alpha-D-ribose 1-diphosphate + uracil. It participates in pyrimidine metabolism; UMP biosynthesis via salvage pathway; UMP from uracil: step 1/1. Its activity is regulated as follows. Allosterically activated by GTP. Its function is as follows. Catalyzes the conversion of uracil and 5-phospho-alpha-D-ribose 1-diphosphate (PRPP) to UMP and diphosphate. This chain is Uracil phosphoribosyltransferase, found in Lachnoclostridium phytofermentans (strain ATCC 700394 / DSM 18823 / ISDg) (Clostridium phytofermentans).